The primary structure comprises 458 residues: ELITERGCSGPASNLNIGHGGLNQLGGAFVNGRPLPEVVRQRIVDLAHQGVRPCDISRQLRVSHGCVSKILGRYYETGSIRPGVIGGSKPKVATPKVVEKIGDYKRQNPTMFAWEIRDRLLAEGVCDNDTVPSVSSINRIIRTKVQQLFNLPMESCVKSLSPGQTLIPSSAVTPPESPHSDSLGSTYSISGLLGITQPGADGKRKLDDSDQESCRLSIDSQGSMGISRKQLRTEAYGHHPLDALECHFQRQHFPESYSSSTHSKTEQALYTLPLLNNAMDDGKSSLTSTNTTIGRNLSTHQGYSALSELSAFTIKQEASDSSSASSTPSSLCSPTFLDLQPISSGCSAPSFSAFSHPASVYGQFTSHMASGRDVVGSTLPGYPPHIPSGQGNYASSAIAGMVAAGGDYSGNAYSHGAYAAYGESWRFPSSSLLGSPYYYSSATRTAPPPTTAGAYDLL.

The paired DNA-binding region spans 18–144 (GHGGLNQLGG…SSINRIIRTK (127 aa)). The segment at 21–77 (GLNQLGGAFVNGRPLPEVVRQRIVDLAHQGVRPCDISRQLRVSHGCVSKILGRYYET) is PAI subdomain. The interval 96–144 (KVVEKIGDYKRQNPTMFAWEIRDRLLAEGVCDNDTVPSVSSINRIIRTK) is RED subdomain. Residues 198–217 (PGADGKRKLDDSDQESCRLS) are disordered.

It is found in the nucleus. Its function is as follows. Probable transcription factor. Involved in kidney development, acting synergistically with lhx1/lim-1 to establish the pronephric primordium in late gastrulae/early neurulae. The protein is Paired box protein Pax-8 of Xenopus tropicalis (Western clawed frog).